Reading from the N-terminus, the 389-residue chain is S-adenosylmethionine synthase (389 aa).

His17 is an ATP binding site. Position 19 (Asp19) interacts with Mg(2+). K(+) is bound at residue Glu45. Residues Glu58 and Gln101 each contribute to the L-methionine site. The interval 101 to 111 (QSPDISQGVTE) is flexible loop. ATP-binding positions include 168 to 170 (DSK), 234 to 235 (RF), Asp243, 249 to 250 (RK), Ala266, and Lys270. Residue Asp243 participates in L-methionine binding. Residue Lys274 coordinates L-methionine.

Belongs to the AdoMet synthase family. As to quaternary structure, homotetramer; dimer of dimers. Mg(2+) serves as cofactor. The cofactor is K(+).

Its subcellular location is the cytoplasm. It catalyses the reaction L-methionine + ATP + H2O = S-adenosyl-L-methionine + phosphate + diphosphate. The protein operates within amino-acid biosynthesis; S-adenosyl-L-methionine biosynthesis; S-adenosyl-L-methionine from L-methionine: step 1/1. Functionally, catalyzes the formation of S-adenosylmethionine (AdoMet) from methionine and ATP. The overall synthetic reaction is composed of two sequential steps, AdoMet formation and the subsequent tripolyphosphate hydrolysis which occurs prior to release of AdoMet from the enzyme. The protein is S-adenosylmethionine synthase of Geobacter metallireducens (strain ATCC 53774 / DSM 7210 / GS-15).